The sequence spans 430 residues: Trigger factor (430 aa).

The PPIase FKBP-type domain maps to 157–242 (GDLVALETWS…AVEVSEPVLP (86 aa)).

It belongs to the FKBP-type PPIase family. Tig subfamily.

The protein resides in the cytoplasm. It catalyses the reaction [protein]-peptidylproline (omega=180) = [protein]-peptidylproline (omega=0). Functionally, involved in protein export. Acts as a chaperone by maintaining the newly synthesized protein in an open conformation. Functions as a peptidyl-prolyl cis-trans isomerase. The sequence is that of Trigger factor from Xanthomonas campestris pv. campestris (strain B100).